The primary structure comprises 122 residues: Histone H2B, gonadal (122 aa).

The segment at 1–31 (MPPKPSGKGQKKAGKAKGAPRTDKKRRRKRK) is disordered. Residue proline 2 is modified to N,N-dimethylproline. O-linked (GlcNAc) serine glycosylation is present at serine 109. Residue lysine 117 forms a Glycyl lysine isopeptide (Lys-Gly) (interchain with G-Cter in ubiquitin) linkage.

It belongs to the histone H2B family. The nucleosome is a histone octamer containing two molecules each of H2A, H2B, H3 and H4 assembled in one H3-H4 heterotetramer and two H2A-H2B heterodimers. The octamer wraps approximately 147 bp of DNA. In terms of processing, monoubiquitination of Lys-117 gives a specific tag for epigenetic transcriptional activation and is also prerequisite for histone H3 'Lys-4' and 'Lys-79' methylation. GlcNAcylation at Ser-109 promotes monoubiquitination of Lys-117. It fluctuates in response to extracellular glucose, and associates with transcribed genes.

The protein localises to the nucleus. The protein resides in the chromosome. Core component of nucleosome. Nucleosomes wrap and compact DNA into chromatin, limiting DNA accessibility to the cellular machineries which require DNA as a template. Histones thereby play a central role in transcription regulation, DNA repair, DNA replication and chromosomal stability. DNA accessibility is regulated via a complex set of post-translational modifications of histones, also called histone code, and nucleosome remodeling. This is Histone H2B, gonadal from Asterias rubens (Common European starfish).